The sequence spans 270 residues: SAMP-activating enzyme E1 (270 aa).

Residues glycine 42, aspartate 63, serine 70–arginine 74, and lysine 87 each bind ATP. Residue lysine 113 forms a Glycyl lysine isopeptide (Lys-Gly) (interchain with G-Cter in SAMP2) linkage. Aspartate 131 to asparagine 132 is a binding site for ATP. Positions 171 and 174 each coordinate Zn(2+). The Glycyl thioester intermediate role is filled by cysteine 188. Cysteine 245 and cysteine 248 together coordinate Zn(2+).

It belongs to the HesA/MoeB/ThiF family. In terms of assembly, interacts with NcsA. It depends on Zn(2+) as a cofactor. Post-translationally, sampylated at Lys-113 with the archaeal ubiquitin-like protein SAMP2. Also sampylated with SAMP1.

The enzyme catalyses [small archaeal modifier protein]-C-terminal Gly-Gly + ATP + H(+) = [small archaeal modifier protein]-C-terminal Gly-Gly-AMP + diphosphate. Functionally, likely activates multiple ubiquitin-like SAMPs for protein conjugation as well as for sulfur transfer, via ATP-dependent adenylation at their C-terminus. In fact, it is required for the formation of all three SAMP1-, SAMP2- and SAMP3-protein conjugates, and for molybdenum cofactor (MoCo) biosynthesis and thiolation of tRNAs. The chain is SAMP-activating enzyme E1 (ubaA) from Haloferax volcanii (strain ATCC 29605 / DSM 3757 / JCM 8879 / NBRC 14742 / NCIMB 2012 / VKM B-1768 / DS2) (Halobacterium volcanii).